Consider the following 331-residue polypeptide: Benzylsuccinate synthase activating enzyme (331 aa).

Residues 15 to 315 (QDGPGIRTTI…VTIGGIVGIA (301 aa)) form the Radical SAM core domain. [4Fe-4S] cluster-binding residues include cysteine 29, cysteine 33, cysteine 36, cysteine 55, cysteine 58, cysteine 61, cysteine 65, cysteine 89, cysteine 92, cysteine 95, and cysteine 99. Residue 35–37 (WCH) participates in S-adenosyl-L-methionine binding. 4Fe-4S ferredoxin-type domains follow at residues 46 to 75 (QEFY…LVRN) and 80 to 109 (TIVQ…IVGQ). S-adenosyl-L-methionine-binding positions include glycine 139, 189–191 (DLK), and histidine 263.

The protein belongs to the organic radical-activating enzymes family. [4Fe-4S] cluster is required as a cofactor.

It catalyses the reaction glycyl-[protein] + reduced [flavodoxin] + S-adenosyl-L-methionine = glycin-2-yl radical-[protein] + semiquinone [flavodoxin] + 5'-deoxyadenosine + L-methionine + H(+). It functions in the pathway xenobiotic degradation; toluene degradation [regulation]. In terms of biological role, activation of benzylsuccinate synthase under anaerobic conditions by generation of an organic free radical, using S-adenosylmethionine and reduced flavodoxin as cosubstrates to produce 5'-deoxy-adenosine. The protein is Benzylsuccinate synthase activating enzyme (bssD) of Thauera aromatica.